The primary structure comprises 475 residues: Zinc-regulated GTPase metalloprotein activator 1 (475 aa).

50–57 is a binding site for GTP; sequence GFLGSGKT. Zn(2+)-binding residues include cysteine 116, cysteine 118, and cysteine 119. The CXCC motif motif lies at 116 to 119; sequence CICC. GTP contacts are provided by residues 119–123 and 229–232; these read CTMRE and NKCD. Residues 302-420 form the CobW C-terminal domain; the sequence is IKSFIYKARR…LIESELNNCL (119 aa). The stretch at 440 to 467 forms a coiled coil; that stretch reads IQLDEELEEEELEEEEEEGEYKDEIEMK. Positions 445–460 are enriched in acidic residues; it reads ELEEEELEEEEEEGEY. The disordered stretch occupies residues 445-475; the sequence is ELEEEELEEEEEEGEYKDEIEMKVDGSKFKK. The segment covering 461-475 has biased composition (basic and acidic residues); the sequence is KDEIEMKVDGSKFKK.

It belongs to the SIMIBI class G3E GTPase family. ZNG1 subfamily.

It carries out the reaction GTP + H2O = GDP + phosphate + H(+). Its function is as follows. Zinc chaperone that directly transfers zinc cofactor to target metalloproteins, thereby activating them. Zinc is transferred from the CXCC motif in the GTPase domain to the zinc binding site in target proteins in a process requiring GTP hydrolysis. The chain is Zinc-regulated GTPase metalloprotein activator 1 from Dictyostelium discoideum (Social amoeba).